The primary structure comprises 549 residues: Glucose-6-phosphate isomerase (549 aa).

The Proton donor role is filled by glutamate 355. Active-site residues include histidine 386 and lysine 514.

The protein belongs to the GPI family.

The protein resides in the cytoplasm. The enzyme catalyses alpha-D-glucose 6-phosphate = beta-D-fructose 6-phosphate. It functions in the pathway carbohydrate biosynthesis; gluconeogenesis. It participates in carbohydrate degradation; glycolysis; D-glyceraldehyde 3-phosphate and glycerone phosphate from D-glucose: step 2/4. Functionally, catalyzes the reversible isomerization of glucose-6-phosphate to fructose-6-phosphate. The protein is Glucose-6-phosphate isomerase of Salmonella paratyphi A (strain AKU_12601).